Reading from the N-terminus, the 249-residue chain is Large ribosomal subunit protein uL10m (249 aa).

The transit peptide at 1 to 31 (MLQLRFMPGWVPRNGFFGLKETIGTVHKRFY) directs the protein to the mitochondrion. A disordered region spans residues 226-249 (SHNDNQKPKEDVESTTDAESKGSK).

Belongs to the universal ribosomal protein uL10 family. As to quaternary structure, component of the mitochondrial large ribosomal subunit (mt-LSU). Mature yeast 74S mitochondrial ribosomes consist of a small (37S) and a large (54S) subunit. The 37S small subunit contains a 15S ribosomal RNA (15S mt-rRNA) and 34 different proteins. The 54S large subunit contains a 21S rRNA (21S mt-rRNA) and 46 different proteins.

Its subcellular location is the mitochondrion. Functionally, component of the mitochondrial ribosome (mitoribosome), a dedicated translation machinery responsible for the synthesis of mitochondrial genome-encoded proteins, including at least some of the essential transmembrane subunits of the mitochondrial respiratory chain. The mitoribosomes are attached to the mitochondrial inner membrane and translation products are cotranslationally integrated into the membrane. This Saccharomyces cerevisiae (strain ATCC 204508 / S288c) (Baker's yeast) protein is Large ribosomal subunit protein uL10m (MRPL11).